A 362-amino-acid chain; its full sequence is Probable dual-specificity RNA methyltransferase RlmN (362 aa).

The active-site Proton acceptor is glutamate 105. Residues 111 to 344 enclose the Radical SAM core domain; the sequence is HEYGNSICVT…VTIRREQGHD (234 aa). A disulfide bridge connects residues cysteine 118 and cysteine 349. Residues cysteine 125, cysteine 129, and cysteine 132 each coordinate [4Fe-4S] cluster. S-adenosyl-L-methionine contacts are provided by residues 175 to 176, serine 207, 230 to 232, and asparagine 306; these read GE and SLH. The active-site S-methylcysteine intermediate is the cysteine 349.

It belongs to the radical SAM superfamily. RlmN family. [4Fe-4S] cluster is required as a cofactor.

It is found in the cytoplasm. It catalyses the reaction adenosine(2503) in 23S rRNA + 2 reduced [2Fe-2S]-[ferredoxin] + 2 S-adenosyl-L-methionine = 2-methyladenosine(2503) in 23S rRNA + 5'-deoxyadenosine + L-methionine + 2 oxidized [2Fe-2S]-[ferredoxin] + S-adenosyl-L-homocysteine. The catalysed reaction is adenosine(37) in tRNA + 2 reduced [2Fe-2S]-[ferredoxin] + 2 S-adenosyl-L-methionine = 2-methyladenosine(37) in tRNA + 5'-deoxyadenosine + L-methionine + 2 oxidized [2Fe-2S]-[ferredoxin] + S-adenosyl-L-homocysteine. Functionally, specifically methylates position 2 of adenine 2503 in 23S rRNA and position 2 of adenine 37 in tRNAs. The protein is Probable dual-specificity RNA methyltransferase RlmN of Bacillus anthracis (strain CDC 684 / NRRL 3495).